A 3341-amino-acid chain; its full sequence is Genome polyprotein (3341 aa).

2 stretches are compositionally biased toward basic and acidic residues: residues 1–14 (MKRK…KAPG) and 24–35 (REGRRKDKDKGG). The interval 1–57 (MKRKDLEARGKAPGRDSSTPFWGREGRRKDKDKGGESPSNRQVTLKTPIQSGRRAGK) is disordered. Over 1 to 120 (MKRKDLEARG…LESRRTTGNP (120 aa)) the chain is Cytoplasmic. The span at 37 to 50 (SPSNRQVTLKTPIQ) shows a compositional bias: polar residues. Positions 55–97 (AGKRQRVGLLGRLGVGWGSFLQEDIVQALIHMALVLHALFASI) are hydrophobic; homodimerization of capsid protein C. Residues 117 to 136 (TGNPMTLAFILGFLTVLCGC) constitute a propeptide, ER anchor for the capsid protein C, removed in mature form by serine protease NS3. A helical transmembrane segment spans residues 121–141 (MTLAFILGFLTVLCGCVVIDM). Residues 142–245 (QVSTTRGTEI…AFKTIRENKT (104 aa)) are Extracellular-facing. N-linked (GlcNAc...) asparagine; by host glycosylation is found at N157 and N243. The helical transmembrane segment at 246-262 (IFIVALLCVAIAKRWPT) threads the bilayer. A topological domain (cytoplasmic) is located at residue W263. A helical membrane pass occupies residues 264-278 (VVILLAIGTWTTVKG). The Extracellular segment spans residues 279–665 (EFVEPLYTLK…GVWQDLVGKF (387 aa)). N339 carries N-linked (GlcNAc...) asparagine; by host glycosylation. The involved in fusion stretch occupies residues 371 to 384 (NRGWGTGCFKWGIG). N399, N411, N575, and N611 each carry an N-linked (GlcNAc...) asparagine; by host glycan. Residues 666-686 (SVGAFFSNTALLVILVLAALI) traverse the membrane as a helical segment. At 687-689 (DKR) the chain is on the cytoplasmic side. A helical transmembrane segment spans residues 690-705 (IAFLLVLGGYFYYVRA). Topologically, residues 706 to 1138 (DLGCGIDTTR…AKTRTSTLTR (433 aa)) are extracellular. N-linked (GlcNAc...) asparagine; by host glycans are attached at residues N794, N896, N993, and N1027. Residues 1139 to 1159 (LFLTILAMALFGLPNLFSSVG) traverse the membrane as a helical segment. The Cytoplasmic segment spans residues 1160-1178 (LSAWVLLVASSSAQPQDLS). The chain crosses the membrane as a helical span at residues 1179–1199 (MNLWIVLQTGSSAVLLLGYMI). The Lumenal segment spans residues 1200 to 1204 (RRKLA). The helical transmembrane segment at 1205–1225 (MVLGVHHLVTLMCVQFLFSAV) threads the bilayer. Residues 1226–1231 (DRYQKY) lie on the Cytoplasmic side of the membrane. Residues 1232–1252 (LYGLLELMASVVLLSAYKSVL) form a helical membrane-spanning segment. Residues 1253–1261 (QALPPEVLC) lie on the Lumenal side of the membrane. A helical membrane pass occupies residues 1262 to 1282 (FSLVMGWKTALSLATVVFLIF). Residues 1283 to 1303 (SLNAMYKYACQYHNPRNGYRD) are Cytoplasmic-facing. A helical membrane pass occupies residues 1304 to 1324 (SGANLWFWTVSLASAGGIWAA). Over 1325–1326 (EK) the chain is Lumenal. A helical membrane pass occupies residues 1327–1347 (AHQPTVAAVLAFTMVVLFLYM). Topologically, residues 1348-1403 (EQTNVSMELEFISAGETPEGVSTENDDGINIPDLKGRYGEDGIVVGAASSSGYLPE) are cytoplasmic. An intramembrane region (helical) is located at residues 1404-1424 (LVFVFLLGFAVTSTSYFLGAL). At 1425 to 2089 (YLLIATSTNL…TERSLTVVMA (665 aa)) the chain is on the cytoplasmic side. The Peptidase S7 domain occupies 1452 to 1630 (SDDLLGLGGP…KPTDVTESLN (179 aa)). Residues H1506, D1530, and S1589 each act as charge relay system; for serine protease NS3 activity in the active site. Residues 1627 to 1780 (ESLNCDSTRR…SNYAISDQSI (154 aa)) form the Helicase ATP-binding domain. Residue 1640–1647 (WHPGKGKT) coordinates ATP. A DECH box motif is present at residues 1729–1732 (DECH). In terms of domain architecture, Helicase C-terminal spans 1793–1947 (NVQKSVGAKK…TFMLEEAAYS (155 aa)). A helical transmembrane segment spans residues 2090–2110 (FVLGVSIMLSCFIAVWALCFL). The Lumenal segment spans residues 2111–2145 (FSLFRPKKATYEQMPSSDPLSGGVLVSTPSVLYCM). Residues 2146 to 2166 (GVPLGFCVVITLAMFLVYPVL) traverse the membrane as a helical segment. Topologically, residues 2167-2178 (YKSIGNRSYMDS) are cytoplasmic. Residues 2179–2199 (DLVKWVILGSCLICGVLAWEM) traverse the membrane as a helical segment. Over 2200 to 2242 (RMFPNIRSDLMELVKAVKEPEEVVNSGPSFPSWEIAQGKGATM) the chain is Lumenal. Residues 2243-2263 (LDSLQVFFFITVLSTKFLYWF) traverse the membrane as a helical segment. Topologically, residues 2264 to 2302 (QENWTARMYAMKHPEMVSSIGGFRFDEIPFRAVLPSGFA) are cytoplasmic. The helical intramembrane region spans 2303 to 2323 (IVAIASLPSVVVGLLAAGVFM). At 2324–2366 (AIMYCQNKWNATPKILTALDARDQRHDRPTEITSRVPLENTRS) the chain is on the cytoplasmic side. The chain crosses the membrane as a helical span at residues 2367–2387 (IMYAFCLIFSLFWAFCTRSPG). At 2388–2412 (DFLRGSLVVGASMWQILHPRSKIHD) the chain is on the lumenal side. Residues 2413-2433 (VMDFGSMVSAIGLLEMNYLFY) traverse the membrane as a helical segment. Topologically, residues 2434–3341 (RFMHIAARAL…SRYRRGNDVI (908 aa)) are cytoplasmic. An mRNA cap 0-1 NS5-type MT domain is found at 2454 to 2706 (ALEKSTTIGL…SPVLPKGTRA (253 aa)). Residue S2497 coordinates S-adenosyl-L-methionine. The active-site For 2'-O-MTase activity is K2509. The S-adenosyl-L-methionine site is built by G2527, W2528, T2545, I2546, D2572, and V2573. Residue D2587 is the For 2'-O-MTase activity of the active site. I2588 provides a ligand contact to S-adenosyl-L-methionine. Residues K2624 and E2660 each act as for 2'-O-MTase activity in the active site. Y2662 serves as a coordination point for S-adenosyl-L-methionine. Residues E2881, H2885, C2890, and C2893 each contribute to the Zn(2+) site. In terms of domain architecture, RdRp catalytic spans 2970 to 3117 (KYLIADDIAG…STDNRDFSSA (148 aa)). Zn(2+) is bound by residues H3152, C3168, and C3287.

The protein in the N-terminal section; belongs to the class I-like SAM-binding methyltransferase superfamily. mRNA cap 0-1 NS5-type methyltransferase family. Homodimer. In terms of assembly, forms heterodimers with envelope protein E in the endoplasmic reticulum and Golgi. As to quaternary structure, homodimer; in the endoplasmic reticulum and Golgi. Forms homodimers as well as homohexamers. NS1 may interact with NS4A. In terms of assembly, forms a heterodimer with serine protease NS3. May form homooligomers. As to quaternary structure, forms a heterodimer with NS2B. Interacts with NS4B. Interacts with unphosphorylated RNA-directed RNA polymerase NS5; this interaction stimulates RNA-directed RNA polymerase NS5 guanylyltransferase activity. Interacts with serine protease NS3. In terms of assembly, interacts with host STAT2; this interaction inhibits the phosphorylation of the latter, and, when all viral proteins are present (polyprotein), targets STAT2 for degradation. Post-translationally, genome polyprotein: Specific enzymatic cleavages in vivo yield mature proteins. Cleavages in the lumen of endoplasmic reticulum are performed by host signal peptidase, whereas cleavages in the cytoplasmic side are performed by serine protease NS3. Signal cleavage at the 2K-4B site requires a prior NS3 protease-mediated cleavage at the 4A-2K site. In terms of processing, cleaved in post-Golgi vesicles by a host furin, releasing the mature small envelope protein M, and peptide pr. This cleavage is incomplete as up to 30% of viral particles still carry uncleaved prM. N-glycosylated. Post-translationally, N-glycosylated. The excreted form is glycosylated and this is required for efficient secretion of the protein from infected cells. In terms of processing, phosphorylated on serines residues. This phosphorylation may trigger NS5 nuclear localization.

The protein localises to the virion. Its subcellular location is the host nucleus. It is found in the secreted. It localises to the virion membrane. The protein resides in the host endoplasmic reticulum membrane. The catalysed reaction is Selective hydrolysis of -Xaa-Xaa-|-Yaa- bonds in which each of the Xaa can be either Arg or Lys and Yaa can be either Ser or Ala.. It carries out the reaction RNA(n) + a ribonucleoside 5'-triphosphate = RNA(n+1) + diphosphate. The enzyme catalyses a ribonucleoside 5'-triphosphate + H2O = a ribonucleoside 5'-diphosphate + phosphate + H(+). It catalyses the reaction ATP + H2O = ADP + phosphate + H(+). The catalysed reaction is a 5'-end (5'-triphosphoguanosine)-ribonucleoside in mRNA + S-adenosyl-L-methionine = a 5'-end (N(7)-methyl 5'-triphosphoguanosine)-ribonucleoside in mRNA + S-adenosyl-L-homocysteine. It carries out the reaction a 5'-end (N(7)-methyl 5'-triphosphoguanosine)-ribonucleoside in mRNA + S-adenosyl-L-methionine = a 5'-end (N(7)-methyl 5'-triphosphoguanosine)-(2'-O-methyl-ribonucleoside) in mRNA + S-adenosyl-L-homocysteine + H(+). Its function is as follows. Plays a role in virus budding by binding to the cell membrane and gathering the viral RNA into a nucleocapsid that forms the core of a mature virus particle. During virus entry, may induce genome penetration into the host cytoplasm after hemifusion induced by the surface proteins. Can migrate to the cell nucleus where it modulates host functions. In terms of biological role, prevents premature fusion activity of envelope proteins in trans-Golgi by binding to envelope protein E at pH6.0. After virion release in extracellular space, gets dissociated from E dimers. Acts as a chaperone for envelope protein E during intracellular virion assembly by masking and inactivating envelope protein E fusion peptide. prM is the only viral peptide matured by host furin in the trans-Golgi network probably to avoid catastrophic activation of the viral fusion activity in acidic Golgi compartment prior to virion release. prM-E cleavage is inefficient, and many virions are only partially matured. These uncleaved prM would play a role in immune evasion. Functionally, may play a role in virus budding. Exerts cytotoxic effects by activating a mitochondrial apoptotic pathway through M ectodomain. May display a viroporin activity. Its function is as follows. Binds to host cell surface receptor and mediates fusion between viral and cellular membranes. Envelope protein is synthesized in the endoplasmic reticulum in the form of heterodimer with protein prM. They play a role in virion budding in the ER, and the newly formed immature particle is covered with 60 spikes composed of heterodimer between precursor prM and envelope protein E. The virion is transported to the Golgi apparatus where the low pH causes dissociation of PrM-E heterodimers and formation of E homodimers. prM-E cleavage is inefficient, and many virions are only partially matured. These uncleaved prM would play a role in immune evasion. In terms of biological role, involved in immune evasion, pathogenesis and viral replication. Once cleaved off the polyprotein, is targeted to three destinations: the viral replication cycle, the plasma membrane and the extracellular compartment. May play a role in viral genome replication. Assist membrane bending and envelopment of genomic RNA at the endoplasmic reticulum. Excreted as a hexameric lipoparticle that plays a role against host immune response. Component of the viral RNA replication complex that functions in virion assembly and antagonizes the host immune response. Functionally, required cofactor for the serine protease function of NS3. May have membrane-destabilizing activity and form viroporins. Its function is as follows. Displays three enzymatic activities: serine protease, NTPase and RNA helicase. NS3 serine protease, in association with NS2B, performs its autocleavage and cleaves the polyprotein at dibasic sites in the cytoplasm: C-prM, NS2A-NS2B, NS2B-NS3, NS3-NS4A, NS4A-2K and NS4B-NS5. NS3 RNA helicase binds RNA and unwinds dsRNA in the 3' to 5' direction. In terms of biological role, regulates the ATPase activity of the NS3 helicase activity. NS4A allows NS3 helicase to conserve energy during unwinding. Functions as a signal peptide for NS4B and is required for the interferon antagonism activity of the latter. Functionally, inhibits interferon (IFN)-induced host STAT1 phosphorylation and nuclear translocation, thereby preventing the establishment of a cellular antiviral state by blocking the IFN-alpha/beta pathway. Its function is as follows. Replicates the viral (+) and (-) RNA genome, and performs the capping of genomes in the cytoplasm. NS5 methylates viral RNA cap at guanine N-7 and ribose 2'-O positions. Besides its role in RNA genome replication, also prevents the establishment of cellular antiviral state by blocking the interferon-alpha/beta (IFN-alpha/beta) signaling pathway. Inhibits host TYK2 and STAT2 phosphorylation, thereby preventing activation of JAK-STAT signaling pathway. The polypeptide is Genome polyprotein (Aedes (CFA flavivirus)).